Reading from the N-terminus, the 753-residue chain is MGRRAWTLQCTAFSLFCAWCAMNSVKAKKQFVNEWAAEIPGGPEAASAIAQELGYDLLGQIGSLENHYLFKHRNHPRRSRRSALHITKRLSDDDRVIWAEQQYEKERSKRSVLRDSALDLFNDPMWNQQWYLQDTRMTATLPKLDLHVIPVWQKGITGKGVVITVLDDGLEWNHTDIYANYDPEASYDFNDNDHDPFPRYDLINENKHGTRCAGEIAMQANNHKCGVGVAYNSKVGGIRMLDGIVTDAIEASLIGFNPGHVDIYSASWGPNDDGKTVEGPGRLAQKAFEYGVKQGRQGKGSIFVWASGNGGRQGDNCDCDGYTDSIYTISINSASQQGLSPWYAEKCSSTLATSYSSGDYTDQRITSADLHNDCTETHTGTSASAPLAAGIFALALEANPNLTWRDMQHLVVWTSEYDPLANNPGWKKNGAGLMVNSRFGFGLLNAKALVDLADPSTWSSVPEKKECVVKDNDFEPRALKANGEVIIEIPTRACEGQENAIKSLEHVQFEATIEYSRRGDLHVTLTSAAGTSTVLLAERERDTSPNGFKNWDFMSVHTWGENPIGTWTLRIADMSGRIQNEGRIVTWKLILHGTSSQPEHMKQPRVYTSYNTVQNDRRGVEKVVDSGEEQPTQEGLDENAQASQSPSGSGVGGRRDELAEGAPSEAMLRLLQSAFSKNSPSKQSPKKPPSAKPNIPYENFYEALERLNKPSQLKDSEDSLYNDYVDGFYNTKPYKHRDDRLLQALVDLLREEN.

The N-terminal stretch at 1 to 27 (MGRRAWTLQCTAFSLFCAWCAMNSVKA) is a signal peptide. The propeptide occupies 28–110 (KKQFVNEWAA…QQYEKERSKR (83 aa)). Residues 129–450 (QWYLQDTRMT…FGLLNAKALV (322 aa)) form the Peptidase S8 domain. D167 serves as the catalytic Charge relay system. An N-linked (GlcNAc...) asparagine glycan is attached at N173. The Charge relay system role is filled by H208. 2 cysteine pairs are disulfide-bonded: C225–C374 and C317–C347. The active-site Charge relay system is S382. N401 is a glycosylation site (N-linked (GlcNAc...) asparagine). The 138-residue stretch at 460–597 (SVPEKKECVV…KLILHGTSSQ (138 aa)) folds into the P/Homo B domain. A disulfide bond links C467 and C494. 2 disordered regions span residues 617-657 (RRGV…RRDE) and 676-695 (SKNS…KPNI).

It belongs to the peptidase S8 family. Furin subfamily. Ca(2+) is required as a cofactor.

It localises to the cytoplasmic vesicle. It is found in the secretory vesicle. It carries out the reaction Release of protein hormones, neuropeptides and renin from their precursors, generally by hydrolysis of -Lys-Arg-|- bonds.. Functionally, involved in the processing of hormone and other protein precursors at sites comprised of pairs of basic amino acid residues. Substrates include POMC, renin, enkephalin, dynorphin, somatostatin, insulin and AGRP. The chain is Neuroendocrine convertase 1 (PCSK1) from Bos taurus (Bovine).